Reading from the N-terminus, the 428-residue chain is Serine--tRNA ligase (428 aa).

An L-serine-binding site is contributed by 231-233 (TAE). ATP contacts are provided by residues 262-264 (RRE) and Val-278. An L-serine-binding site is contributed by Glu-285. 349 to 352 (EVSS) contacts ATP. Ser-384 contributes to the L-serine binding site.

The protein belongs to the class-II aminoacyl-tRNA synthetase family. Type-1 seryl-tRNA synthetase subfamily. In terms of assembly, homodimer. The tRNA molecule binds across the dimer.

The protein localises to the cytoplasm. The enzyme catalyses tRNA(Ser) + L-serine + ATP = L-seryl-tRNA(Ser) + AMP + diphosphate + H(+). It catalyses the reaction tRNA(Sec) + L-serine + ATP = L-seryl-tRNA(Sec) + AMP + diphosphate + H(+). Its pathway is aminoacyl-tRNA biosynthesis; selenocysteinyl-tRNA(Sec) biosynthesis; L-seryl-tRNA(Sec) from L-serine and tRNA(Sec): step 1/1. Its function is as follows. Catalyzes the attachment of serine to tRNA(Ser). Is also able to aminoacylate tRNA(Sec) with serine, to form the misacylated tRNA L-seryl-tRNA(Sec), which will be further converted into selenocysteinyl-tRNA(Sec). The protein is Serine--tRNA ligase of Chlamydia trachomatis serovar A (strain ATCC VR-571B / DSM 19440 / HAR-13).